A 206-amino-acid polypeptide reads, in one-letter code: 3-demethoxyubiquinol 3-hydroxylase (206 aa).

The Fe cation site is built by Glu-55, Glu-85, His-88, Glu-137, Glu-169, and His-172.

It belongs to the COQ7 family. Fe cation serves as cofactor.

It is found in the cell membrane. The enzyme catalyses a 5-methoxy-2-methyl-3-(all-trans-polyprenyl)benzene-1,4-diol + AH2 + O2 = a 3-demethylubiquinol + A + H2O. Its pathway is cofactor biosynthesis; ubiquinone biosynthesis. Catalyzes the hydroxylation of 2-nonaprenyl-3-methyl-6-methoxy-1,4-benzoquinol during ubiquinone biosynthesis. The sequence is that of 3-demethoxyubiquinol 3-hydroxylase from Chromobacterium violaceum (strain ATCC 12472 / DSM 30191 / JCM 1249 / CCUG 213 / NBRC 12614 / NCIMB 9131 / NCTC 9757 / MK).